The chain runs to 105 residues: Large ribosomal subunit protein uL24 (105 aa).

This sequence belongs to the universal ribosomal protein uL24 family. Part of the 50S ribosomal subunit.

Its function is as follows. One of two assembly initiator proteins, it binds directly to the 5'-end of the 23S rRNA, where it nucleates assembly of the 50S subunit. Functionally, one of the proteins that surrounds the polypeptide exit tunnel on the outside of the subunit. This Mycobacterium avium (strain 104) protein is Large ribosomal subunit protein uL24.